Consider the following 438-residue polypeptide: Putative metabolite transport protein HI_0281 (438 aa).

At 1 to 17 the chain is on the cytoplasmic side; sequence MSTQLRNNPMKVALASM. The chain crosses the membrane as a helical span at residues 18–38; sequence VGTAIEFFDYYIYAAAAVLVF. Residues 39 to 52 are Periplasmic-facing; it reads NTQFFHSDDPLSND. Residues 53–73 traverse the membrane as a helical segment; sequence LLSLSTLALAFFARPIGSALF. At 74–85 the chain is on the cytoplasmic side; sequence GHFGDKIGRKKT. A helical membrane pass occupies residues 86-106; that stretch reads LVASLVLMGGSTVVIGLLPNY. At 107–115 the chain is on the periplasmic side; sequence AQIGIWAPI. The chain crosses the membrane as a helical span at residues 116–136; the sequence is LLCVCRVGQGIGLGGEWGGAA. Residues 137–156 are Cytoplasmic-facing; sequence LVATENAPEGKRAWYGTFPQ. A helical transmembrane segment spans residues 157–177; it reads LGAPIGLFVANGTFFLVSYLL. Over 178–181 the chain is Periplasmic; it reads GHNA. A helical transmembrane segment spans residues 182–202; the sequence is LVEWAWRIPFVSSILLVAVGL. At 203 to 239 the chain is on the cytoplasmic side; it reads YVRLTLHESHVFVEAEQKGKKLNAPVSVVFTKHLKPM. Residues 240–260 traverse the membrane as a helical segment; it reads VIGTFIMVATYSLFYIMTAFA. At 261-286 the chain is on the periplasmic side; the sequence is QAYSRTAPKLSEAGYALGLGIPANTF. The helical transmembrane segment at 287–307 threads the bilayer; that stretch reads TGLLLISAIVFGIFISISGFY. Residues 308 to 314 lie on the Cytoplasmic side of the membrane; the sequence is ADKIGRR. A helical membrane pass occupies residues 315–336; that stretch reads KWLIWVTIAIGVLGLAMPLFLE. Residues 337–342 are Periplasmic-facing; that stretch reads NGTPVS. A helical transmembrane segment spans residues 343 to 363; that stretch reads VFAFLVIGMAIMGMTFGPMAA. Residues 364 to 377 lie on the Cytoplasmic side of the membrane; the sequence is LLPELFPTEVRYSG. A helical membrane pass occupies residues 378 to 398; the sequence is ASLAYNLASIIGATIAAMISL. The Periplasmic segment spans residues 399-405; sequence KINASFG. A helical membrane pass occupies residues 406–426; that stretch reads VMGVGIYLAINALMTFLALLA. Residues 427–438 are Cytoplasmic-facing; that stretch reads SKETKNVDLTEI.

It belongs to the major facilitator superfamily. Sugar transporter (TC 2.A.1.1) family.

The protein localises to the cell inner membrane. This is Putative metabolite transport protein HI_0281 from Haemophilus influenzae (strain ATCC 51907 / DSM 11121 / KW20 / Rd).